Reading from the N-terminus, the 291-residue chain is MPELPEVETVRRGLESVVTDAKIVSVQLNRRDLRFPFPEAFSERLIGRKILELGRRAKYLLFHLSQDETILSHLGMSGSWRIENDLLRTAFSMTSKLVKHDHFIMDIQTRNGDVYHLIYNDVRRFGFMLLVDTDKLYKHPLLNKLGLEPMSHGFSGRYLQKAFVNKKVSLKGVLLDQSIVAGLGNIYVCEALWRSRLSPQRGAFTLASKTVYARELANSLAQNIRNVISEAILSGGSSLRDYMHVDGSLGYFQHAFSVYGREGKECLQCGTPIIRILQSGRSSFYCSQCQK.

The active-site Schiff-base intermediate with DNA is the Pro-2. The active-site Proton donor is the Glu-3. The active-site Proton donor; for beta-elimination activity is the Lys-58. 3 residues coordinate DNA: His-100, Arg-123, and Lys-166. Residues 257–291 (SVYGREGKECLQCGTPIIRILQSGRSSFYCSQCQK) form an FPG-type zinc finger. Arg-281 (proton donor; for delta-elimination activity) is an active-site residue.

It belongs to the FPG family. As to quaternary structure, monomer. Zn(2+) is required as a cofactor.

The catalysed reaction is Hydrolysis of DNA containing ring-opened 7-methylguanine residues, releasing 2,6-diamino-4-hydroxy-5-(N-methyl)formamidopyrimidine.. The enzyme catalyses 2'-deoxyribonucleotide-(2'-deoxyribose 5'-phosphate)-2'-deoxyribonucleotide-DNA = a 3'-end 2'-deoxyribonucleotide-(2,3-dehydro-2,3-deoxyribose 5'-phosphate)-DNA + a 5'-end 5'-phospho-2'-deoxyribonucleoside-DNA + H(+). Involved in base excision repair of DNA damaged by oxidation or by mutagenic agents. Acts as a DNA glycosylase that recognizes and removes damaged bases. Has a preference for oxidized purines, such as 7,8-dihydro-8-oxoguanine (8-oxoG). Has AP (apurinic/apyrimidinic) lyase activity and introduces nicks in the DNA strand. Cleaves the DNA backbone by beta-delta elimination to generate a single-strand break at the site of the removed base with both 3'- and 5'-phosphates. This is Formamidopyrimidine-DNA glycosylase from Bartonella tribocorum (strain CIP 105476 / IBS 506).